The sequence spans 106 residues: Large ribosomal subunit protein uL24 (106 aa).

Belongs to the universal ribosomal protein uL24 family. Part of the 50S ribosomal subunit.

In terms of biological role, one of two assembly initiator proteins, it binds directly to the 5'-end of the 23S rRNA, where it nucleates assembly of the 50S subunit. One of the proteins that surrounds the polypeptide exit tunnel on the outside of the subunit. In Acidiphilium cryptum (strain JF-5), this protein is Large ribosomal subunit protein uL24.